A 172-amino-acid chain; its full sequence is Adenine phosphoribosyltransferase (172 aa).

The protein belongs to the purine/pyrimidine phosphoribosyltransferase family. In terms of assembly, homodimer.

It localises to the cytoplasm. The enzyme catalyses AMP + diphosphate = 5-phospho-alpha-D-ribose 1-diphosphate + adenine. It functions in the pathway purine metabolism; AMP biosynthesis via salvage pathway; AMP from adenine: step 1/1. Catalyzes a salvage reaction resulting in the formation of AMP, that is energically less costly than de novo synthesis. The sequence is that of Adenine phosphoribosyltransferase from Exiguobacterium sp. (strain ATCC BAA-1283 / AT1b).